Here is a 394-residue protein sequence, read N- to C-terminus: Flap endonuclease 1 (394 aa).

Positions 1–103 (MGIKSLYQII…GELAKRTMRK (103 aa)) are N-domain. Position 34 (aspartate 34) interacts with Mg(2+). Arginine 69 lines the DNA pocket. A Mg(2+)-binding site is contributed by aspartate 85. The interval 102 to 123 (RKAEAQEAAEEAKETGTAEDVE) is disordered. Residues 121-252 (DVEKFSRRTV…NTALKMIRDH (132 aa)) are I-domain. Mg(2+) contacts are provided by glutamate 157, glutamate 159, aspartate 178, and aspartate 180. Glutamate 157 contributes to the DNA binding site. Glycine 230 and aspartate 232 together coordinate DNA. Aspartate 232 contributes to the Mg(2+) binding site. An interaction with PCNA region spans residues 340–348 (QQSRLEGFF). The interval 349 to 394 (KPVAKTEQQKATAKRKAEEKAELAKKKKKEDAKAKRAMGAKPRGAR) is disordered. The span at 363–382 (RKAEEKAELAKKKKKEDAKA) shows a compositional bias: basic and acidic residues. The segment covering 383-394 (KRAMGAKPRGAR) has biased composition (basic residues).

This sequence belongs to the XPG/RAD2 endonuclease family. FEN1 subfamily. In terms of assembly, interacts with PCNA. Three molecules of FEN1 bind to one PCNA trimer with each molecule binding to one PCNA monomer. PCNA stimulates the nuclease activity without altering cleavage specificity. It depends on Mg(2+) as a cofactor. Phosphorylated. Phosphorylation upon DNA damage induces relocalization to the nuclear plasma.

It is found in the nucleus. The protein localises to the nucleolus. It localises to the nucleoplasm. The protein resides in the mitochondrion. Functionally, structure-specific nuclease with 5'-flap endonuclease and 5'-3' exonuclease activities involved in DNA replication and repair. During DNA replication, cleaves the 5'-overhanging flap structure that is generated by displacement synthesis when DNA polymerase encounters the 5'-end of a downstream Okazaki fragment. It enters the flap from the 5'-end and then tracks to cleave the flap base, leaving a nick for ligation. Also involved in the long patch base excision repair (LP-BER) pathway, by cleaving within the apurinic/apyrimidinic (AP) site-terminated flap. Acts as a genome stabilization factor that prevents flaps from equilibrating into structures that lead to duplications and deletions. Also possesses 5'-3' exonuclease activity on nicked or gapped double-stranded DNA, and exhibits RNase H activity. Also involved in replication and repair of rDNA and in repairing mitochondrial DNA. This Arthroderma otae (strain ATCC MYA-4605 / CBS 113480) (Microsporum canis) protein is Flap endonuclease 1.